A 194-amino-acid chain; its full sequence is dITP/XTP pyrophosphatase (194 aa).

11 to 16 (SHNAGK) lines the substrate pocket. The active-site Proton acceptor is the D70. D70 is a Mg(2+) binding site. Substrate-binding positions include S71, 149–152 (FGYD), K172, and 177–178 (HR).

This sequence belongs to the HAM1 NTPase family. In terms of assembly, homodimer. Mg(2+) is required as a cofactor.

The catalysed reaction is XTP + H2O = XMP + diphosphate + H(+). It catalyses the reaction dITP + H2O = dIMP + diphosphate + H(+). It carries out the reaction ITP + H2O = IMP + diphosphate + H(+). Its function is as follows. Pyrophosphatase that catalyzes the hydrolysis of nucleoside triphosphates to their monophosphate derivatives, with a high preference for the non-canonical purine nucleotides XTP (xanthosine triphosphate), dITP (deoxyinosine triphosphate) and ITP. Seems to function as a house-cleaning enzyme that removes non-canonical purine nucleotides from the nucleotide pool, thus preventing their incorporation into DNA/RNA and avoiding chromosomal lesions. This chain is dITP/XTP pyrophosphatase, found in Thermosynechococcus vestitus (strain NIES-2133 / IAM M-273 / BP-1).